A 199-amino-acid polypeptide reads, in one-letter code: Dephospho-CoA kinase (199 aa).

The DPCK domain maps to 3 to 199 (VLGLTGSIGM…AAAKMPRRRD (197 aa)). 11–16 (GMGKST) contributes to the ATP binding site.

The protein belongs to the CoaE family.

The protein localises to the cytoplasm. The enzyme catalyses 3'-dephospho-CoA + ATP = ADP + CoA + H(+). It functions in the pathway cofactor biosynthesis; coenzyme A biosynthesis; CoA from (R)-pantothenate: step 5/5. In terms of biological role, catalyzes the phosphorylation of the 3'-hydroxyl group of dephosphocoenzyme A to form coenzyme A. The protein is Dephospho-CoA kinase of Rhodopseudomonas palustris (strain ATCC BAA-98 / CGA009).